Here is a 258-residue protein sequence, read N- to C-terminus: UPF0246 protein VS_0505 (258 aa).

The protein belongs to the UPF0246 family.

This chain is UPF0246 protein VS_0505, found in Vibrio atlanticus (strain LGP32) (Vibrio splendidus (strain Mel32)).